The sequence spans 362 residues: 3-isopropylmalate dehydrogenase (362 aa).

77-88 (GPKWGTGAVRPE) is a binding site for NAD(+). Substrate is bound by residues arginine 95, arginine 105, arginine 134, and aspartate 223. 3 residues coordinate Mg(2+): aspartate 223, aspartate 248, and aspartate 252. An NAD(+)-binding site is contributed by 287–298 (GSAPDLPKGKVN).

Belongs to the isocitrate and isopropylmalate dehydrogenases family. Homodimer. Requires Mg(2+) as cofactor. Mn(2+) serves as cofactor.

Its subcellular location is the cytoplasm. It catalyses the reaction (2R,3S)-3-isopropylmalate + NAD(+) = 4-methyl-2-oxopentanoate + CO2 + NADH. The protein operates within amino-acid biosynthesis; L-leucine biosynthesis; L-leucine from 3-methyl-2-oxobutanoate: step 3/4. Its function is as follows. Catalyzes the oxidation of 3-carboxy-2-hydroxy-4-methylpentanoate (3-isopropylmalate) to 3-carboxy-4-methyl-2-oxopentanoate. The product decarboxylates to 4-methyl-2 oxopentanoate. The chain is 3-isopropylmalate dehydrogenase (LEU2) from Zygosaccharomyces bailii.